The sequence spans 445 residues: Plasmid recombination enzyme (445 aa).

Residues Y45 and Y113 each contribute to the DNA site.

The protein belongs to the plasmid mobilization pre family.

The sequence is that of Plasmid recombination enzyme from Bacillus thuringiensis.